Reading from the N-terminus, the 476-residue chain is MKPVLPDYSKAGVLIVGDVMLDRYWYGPTGRISPEAPVPVVKVEQSEERPGGAANVAMNIASLGGHAHIIGLTGQDEPANVLANKLTSLKVHCDFVALPDYPTITKLRVLSRGQQLIRLDFEDKFENTDAQLILSRMESALPKVRAVILSDYAKGALEHVQQFIQKAKAAGVPVFIDPKGSDFERYRGASLLTPNMSEFEAVVGKVKSEQELVEKGFALIEKFDLGALLVTRSEHGMTLLRRGLEPFHLPTQAKEVYDVTGAGDTVISVLAASVAAGKALDEACALANAAAGVVVGKLGTSTVSTIELAEAVHGSKDTDYGVISEDALIEAVKKAQARGEKVVMTNGCFDILHAGHVSYLNHAAELGDRLIVAVNTDESVKRLKGPGRPVNSTDRRMAVLAGLGAVDWVVPFSEDTPQRLIAAVLPNLLVKGGDYKPEDIAGGKEVIAAGGEVKVLNFEEGCSTTEIIEAIKGGRG.

The ribokinase stretch occupies residues 1–318 (MKPVLPDYSK…AEAVHGSKDT (318 aa)). 195 to 198 (NMSE) serves as a coordination point for ATP. Residue aspartate 264 is part of the active site. A cytidylyltransferase region spans residues 344–476 (MTNGCFDILH…IIEAIKGGRG (133 aa)).

It in the N-terminal section; belongs to the carbohydrate kinase PfkB family. This sequence in the C-terminal section; belongs to the cytidylyltransferase family. In terms of assembly, homodimer.

It carries out the reaction D-glycero-beta-D-manno-heptose 7-phosphate + ATP = D-glycero-beta-D-manno-heptose 1,7-bisphosphate + ADP + H(+). It catalyses the reaction D-glycero-beta-D-manno-heptose 1-phosphate + ATP + H(+) = ADP-D-glycero-beta-D-manno-heptose + diphosphate. The protein operates within nucleotide-sugar biosynthesis; ADP-L-glycero-beta-D-manno-heptose biosynthesis; ADP-L-glycero-beta-D-manno-heptose from D-glycero-beta-D-manno-heptose 7-phosphate: step 1/4. It participates in nucleotide-sugar biosynthesis; ADP-L-glycero-beta-D-manno-heptose biosynthesis; ADP-L-glycero-beta-D-manno-heptose from D-glycero-beta-D-manno-heptose 7-phosphate: step 3/4. Catalyzes the phosphorylation of D-glycero-D-manno-heptose 7-phosphate at the C-1 position to selectively form D-glycero-beta-D-manno-heptose-1,7-bisphosphate. Functionally, catalyzes the ADP transfer from ATP to D-glycero-beta-D-manno-heptose 1-phosphate, yielding ADP-D-glycero-beta-D-manno-heptose. This Vibrio cholerae serotype O1 (strain M66-2) protein is Bifunctional protein HldE.